The following is a 174-amino-acid chain: Transcription antitermination protein NusB (174 aa).

Belongs to the NusB family.

Functionally, involved in transcription antitermination. Required for transcription of ribosomal RNA (rRNA) genes. Binds specifically to the boxA antiterminator sequence of the ribosomal RNA (rrn) operons. In Rhodopseudomonas palustris (strain ATCC BAA-98 / CGA009), this protein is Transcription antitermination protein NusB.